A 734-amino-acid polypeptide reads, in one-letter code: Homoaconitase, mitochondrial (734 aa).

A mitochondrion-targeting transit peptide spans 1–25 (MGASNLLRFGAVTRISTPLLSRRSL). 3 residues coordinate [4Fe-4S] cluster: Cys-367, Cys-427, and Cys-430.

Belongs to the aconitase/IPM isomerase family. Requires [4Fe-4S] cluster as cofactor.

It localises to the mitochondrion. It catalyses the reaction (2R,3S)-homoisocitrate = cis-homoaconitate + H2O. It functions in the pathway amino-acid biosynthesis; L-lysine biosynthesis via AAA pathway; L-alpha-aminoadipate from 2-oxoglutarate: step 3/5. Catalyzes the reversible hydration of cis-homoaconitate to (2R,3S)-homoisocitrate, a step in the alpha-aminoadipate pathway for lysine biosynthesis. In Mycosarcoma maydis (Corn smut fungus), this protein is Homoaconitase, mitochondrial (LYS4).